Consider the following 461-residue polypeptide: Fumarate hydratase class II (461 aa).

Residues 97-99 (SGT), 127-130 (HPND), 137-139 (SSN), and Thr185 each bind substrate. The active-site Proton donor/acceptor is His186. Ser316 is an active-site residue. Residues Ser317 and 322-324 (KVN) contribute to the substrate site.

This sequence belongs to the class-II fumarase/aspartase family. Fumarase subfamily. In terms of assembly, homotetramer.

The protein localises to the cytoplasm. It carries out the reaction (S)-malate = fumarate + H2O. The protein operates within carbohydrate metabolism; tricarboxylic acid cycle; (S)-malate from fumarate: step 1/1. Involved in the TCA cycle. Catalyzes the stereospecific interconversion of fumarate to L-malate. The chain is Fumarate hydratase class II from Staphylococcus aureus (strain MRSA252).